The following is a 271-amino-acid chain: Collectin-11 (271 aa).

The signal sequence occupies residues 1-25 (MVGEKLVAYMLVSVLGLALLRSVFG). A Collagen-like domain is found at 44–103 (GEAGEKGEKGAPGRPGRVGPTGEQGPPGDKGQKGSPGRYGKMGPTGPKGLKGDMGDPGPK). A disordered region spans residues 46–112 (AGEKGEKGAP…KGPNGEPGVP (67 aa)). The stretch at 124–148 (EMDIQVVQLTNELKFIKNAVAGIKE) forms a coiled coil. The 117-residue stretch at 149-265 (TDSKVYLLVK…CQLTMYFVCE (117 aa)) folds into the C-type lectin domain. Cystine bridges form between Cys170/Cys264 and Cys242/Cys256. Position 200 (Arg200) interacts with a carbohydrate. Ca(2+) contacts are provided by Asp207, Glu211, Glu232, Asn234, Asn235, Asp238, Glu240, and Asp241. Glu240 is a binding site for a carbohydrate. A carbohydrate is bound by residues Glu244 and 252 to 254 (IDV). Residue Asp253 coordinates Ca(2+).

Belongs to the COLEC10/COLEC11 family. As to quaternary structure, homotrimer; disulfide-linked. Interacts with MASP1; probably triggers the lectin pathway of complement.

The protein localises to the secreted. Its function is as follows. Lectin that plays a role in innate immunity, apoptosis and embryogenesis. Calcium-dependent lectin that binds self and non-self glycoproteins presenting high mannose oligosaccharides with at least one terminal alpha-1,2-linked mannose epitope. Primarily recognizes the terminal disaccharide of the glycan. Also recognizes a subset of fucosylated glycans and lipopolysaccharides. Plays a role in innate immunity through its ability to bind non-self sugars presented by microorganisms and to activate the complement through the recruitment of MAPS1. Also plays a role in apoptosis through its ability to bind in a calcium-independent manner the DNA present at the surface of apoptotic cells and to activate the complement in response to this binding. Finally, plays a role in development, probably serving as a guidance cue during the migration of neural crest cells and other cell types during embryogenesis. This is Collectin-11 (colec11) from Danio rerio (Zebrafish).